A 463-amino-acid polypeptide reads, in one-letter code: V-type proton ATPase subunit S1 (463 aa).

The first 32 residues, 1–32 (MMAATVVSRIRTGTGRAPVMWLSLSLVAVAAA), serve as a signal peptide directing secretion. Residues 33 to 225 (VATEQQVPLV…TAVRPSRVAR (193 aa)) constitute a propeptide that is removed on maturation. At 33 to 412 (VATEQQVPLV…EQFSYASDCA (380 aa)) the chain is on the lumenal side. Asn-164, Asn-255, Asn-267, Asn-290, Asn-297, Asn-344, Asn-351, and Asn-399 each carry an N-linked (GlcNAc...) asparagine glycan. Cysteines 365 and 411 form a disulfide. Residues 413–433 (GFFSPGIWMGLLTTLFMLFIF) traverse the membrane as a helical segment. The Cytoplasmic segment spans residues 434–463 (TYGLHMILSLKTMDRFDDHKGPTITLTQIV).

This sequence belongs to the vacuolar ATPase subunit S1 family. Accessory component of the multisubunit proton-transporting vacuolar (V)-ATPase protein pump. Interacts (via N-terminus) with ATP6AP2 (via N-terminus). Interacts with RNASEK. Interacts with TMEM106B (via C-terminus). Post-translationally, N-glycosylated. In terms of tissue distribution, expressed in brain cortex (at protein level). Highly expressed in islets of Langerhans. Expressed in pancreatic acini, pituitary gland, adrenal gland, lung, brain and bone marrow.

The protein localises to the endoplasmic reticulum membrane. It localises to the endoplasmic reticulum-Golgi intermediate compartment membrane. Its subcellular location is the cytoplasmic vesicle. The protein resides in the secretory vesicle. It is found in the synaptic vesicle membrane. The protein localises to the clathrin-coated vesicle membrane. Accessory subunit of the proton-transporting vacuolar (V)-ATPase protein pump, which is required for luminal acidification of secretory vesicles. Guides the V-type ATPase into specialized subcellular compartments, such as neuroendocrine regulated secretory vesicles or the ruffled border of the osteoclast, thereby regulating its activity. Involved in membrane trafficking and Ca(2+)-dependent membrane fusion. May play a role in the assembly of the V-type ATPase complex. In aerobic conditions, involved in intracellular iron homeostasis, thus triggering the activity of Fe(2+) prolyl hydroxylase (PHD) enzymes, and leading to HIF1A hydroxylation and subsequent proteasomal degradation. In islets of Langerhans cells, may regulate the acidification of dense-core secretory granules. This Mus musculus (Mouse) protein is V-type proton ATPase subunit S1 (Atp6ap1).